The primary structure comprises 325 residues: Dimethylallyltranstransferase (325 aa).

Positions 54 and 84 each coordinate isopentenyl diphosphate. Mg(2+) contacts are provided by Asp-91 and Asp-95. The DDXXD motif signature appears at 91–95 (DRVVD). Arg-101 is a binding site for isopentenyl diphosphate. Positions 217 to 221 (RDIIA) match the DDXXD motif motif.

It belongs to the FPP/GGPP synthase family. Mg(2+) is required as a cofactor.

It carries out the reaction isopentenyl diphosphate + dimethylallyl diphosphate = (2E)-geranyl diphosphate + diphosphate. It functions in the pathway isoprenoid biosynthesis; geranyl diphosphate biosynthesis; geranyl diphosphate from dimethylallyl diphosphate and isopentenyl diphosphate: step 1/1. Its function is as follows. Catalyzes the addition of isopentenyl diphosphate (IPP) onto dimethylallyl diphosphate (DMAPP) to form geranyl pyrophosphate (GPP). Is probably involved in the biosynthesis of decaprenyl diphosphate, which is required for mycobacterial cell wall synthesis. Could be required for host endothelial-cell invasion and/or intracellular survival. This is Dimethylallyltranstransferase from Mycobacterium tuberculosis (strain ATCC 25618 / H37Rv).